A 315-amino-acid polypeptide reads, in one-letter code: Annexin Gh1 (315 aa).

4 Annexin repeats span residues 10–81 (PSVS…LWAL), 82–153 (DPAE…PLVS), 165–236 (TLAK…STVK), and 240–311 (YPEK…VLAG). Ca(2+) contacts are provided by Phe23, Gly25, Gly27, and Glu67. Ca(2+)-binding residues include Ile253, Arg255, Gly257, Val295, Asp297, Thr298, and Glu303.

The protein belongs to the annexin family. In terms of assembly, monomer. Trimer. Oligomerization is calcium-independent. Disassembly of the oligomers seems to be required for calcium-binding.

It localises to the membrane. Binds to phospholipid vesicles in a calcium-dependent manner in vitro. Prefers phosphatidyl-serine containing membranes. May have a role in the membrane cytoskeleton scaffolding or exocytotic processes. May be involved in oxidative stress response. The polypeptide is Annexin Gh1 (Gossypium hirsutum (Upland cotton)).